Reading from the N-terminus, the 614-residue chain is Pyruvate decarboxylase 2 (614 aa).

2 residues coordinate substrate: Asp-50 and His-137. The segment at 415–523 (DSWFNCQKLK…FLINNGGYTI (109 aa)) is thiamine pyrophosphate binding. Residues Asp-491, Asn-518, and Gly-520 each contribute to the Mg(2+) site. Glu-524 is a binding site for substrate.

The protein belongs to the TPP enzyme family. As to quaternary structure, homotetramer. A metal cation serves as cofactor. The cofactor is thiamine diphosphate. Pollen.

It catalyses the reaction a 2-oxocarboxylate + H(+) = an aldehyde + CO2. In Nicotiana tabacum (Common tobacco), this protein is Pyruvate decarboxylase 2 (PDC2).